The primary structure comprises 117 residues: UPF0122 protein Teth39_1278 (117 aa).

The protein belongs to the UPF0122 family.

Functionally, might take part in the signal recognition particle (SRP) pathway. This is inferred from the conservation of its genetic proximity to ftsY/ffh. May be a regulatory protein. This chain is UPF0122 protein Teth39_1278, found in Thermoanaerobacter pseudethanolicus (strain ATCC 33223 / 39E) (Clostridium thermohydrosulfuricum).